The sequence spans 202 residues: GTP cyclohydrolase-2 (202 aa).

A GTP-binding site is contributed by 48–52 (RLHSE). Residues C53, C64, and C66 each coordinate Zn(2+). GTP is bound by residues Q69, 91-93 (EGR), and T113. Catalysis depends on D125, which acts as the Proton acceptor. Catalysis depends on R127, which acts as the Nucleophile. 2 residues coordinate GTP: T148 and K153.

This sequence belongs to the GTP cyclohydrolase II family. The cofactor is Zn(2+).

The catalysed reaction is GTP + 4 H2O = 2,5-diamino-6-hydroxy-4-(5-phosphoribosylamino)-pyrimidine + formate + 2 phosphate + 3 H(+). Its pathway is cofactor biosynthesis; riboflavin biosynthesis; 5-amino-6-(D-ribitylamino)uracil from GTP: step 1/4. In terms of biological role, catalyzes the conversion of GTP to 2,5-diamino-6-ribosylamino-4(3H)-pyrimidinone 5'-phosphate (DARP), formate and pyrophosphate. The polypeptide is GTP cyclohydrolase-2 (Colwellia psychrerythraea (strain 34H / ATCC BAA-681) (Vibrio psychroerythus)).